Consider the following 1138-residue polypeptide: Nonsense-mediated mRNA decay factor SMG7 (1138 aa).

Ser-2 carries the N-acetylserine modification. TPR repeat units follow at residues 152 to 185 (QHCLVHLGDIARYRNQTSQAESYYRHAAQLVPSN) and 187 to 219 (QPYNQLAILASSKGDHLTTIFYYCRSIAVKFPF). Disordered regions lie at residues 515–612 (ATDG…LPSR), 649–745 (STAH…YQQA), 838–871 (QPNMDRRSKRSPGVFRPEQDPVPRMPFEDPKSSP), 990–1090 (SLPA…PSME), and 1106–1138 (SSMMHPGPSALEQLLMQQKQKQQRGQGAMNPPH). Phosphoserine is present on Ser-519. Positions 525 to 537 (VLSTGRNPSNSCD) are enriched in polar residues. Basic and acidic residues predominate over residues 548–582 (ENIKPREVNQGRSFPPKEVKSQTELRKTPVSEARK). A Phosphothreonine modification is found at Thr-575. Polar residues-rich tracts occupy residues 584 to 597 (PVTQTPSQTSNSQF) and 649 to 673 (STAHSPAGNQVQAGKQSHIPYSQQR). Residues 674 to 721 (PSGPGPMNQGPQQSQPPSQPPLTSLPAQPTAQSTSQLQVQALAQQQQS) show a composition bias toward low complexity. Phosphoserine is present on residues Ser-732 and Ser-848. Positions 854–868 (PEQDPVPRMPFEDPK) are enriched in basic and acidic residues. Over residues 990 to 999 (SLPASSDHST) the composition is skewed to polar residues. Residues 1000–1026 (PASQSPHSSNPSSLPSSPPTHNHNSAP) show a composition bias toward low complexity. Residues 1037 to 1051 (DNRDRRPADRWKTDK) are compositionally biased toward basic and acidic residues. Residues 1063 to 1082 (SATSSSESSWHQASTPSGTW) show a composition bias toward polar residues. The segment covering 1118 to 1132 (QLLMQQKQKQQRGQG) has biased composition (low complexity).

Part of a complex that contains SMG5, SMG7, PPP2CA, a short isoform of UPF3A (isoform UPF3AS, but not isoform UPF3AL) and phosphorylated UPF1. Interacts with DHX34; the interaction is RNA-independent.

The protein localises to the cytoplasm. It is found in the nucleus. Its function is as follows. Plays a role in nonsense-mediated mRNA decay. Recruits UPF1 to cytoplasmic mRNA decay bodies. Together with SMG5 is thought to provide a link to the mRNA degradation machinery involving exonucleolytic pathways, and to serve as an adapter for UPF1 to protein phosphatase 2A (PP2A), thereby triggering UPF1 dephosphorylation. This is Nonsense-mediated mRNA decay factor SMG7 from Mus musculus (Mouse).